The chain runs to 208 residues: Outer-membrane lipoprotein carrier protein (208 aa).

The N-terminal stretch at 1-22 (MKKIFTIAALSLPLFCHLPAMA) is a signal peptide.

Belongs to the LolA family. As to quaternary structure, monomer.

Its subcellular location is the periplasm. Functionally, participates in the translocation of lipoproteins from the inner membrane to the outer membrane. Only forms a complex with a lipoprotein if the residue after the N-terminal Cys is not an aspartate (The Asp acts as a targeting signal to indicate that the lipoprotein should stay in the inner membrane). This is Outer-membrane lipoprotein carrier protein from Shewanella pealeana (strain ATCC 700345 / ANG-SQ1).